We begin with the raw amino-acid sequence, 334 residues long: Succinylglutamate desuccinylase (334 aa).

Zn(2+)-binding residues include histidine 59, glutamate 62, and histidine 151. Glutamate 215 is an active-site residue.

This sequence belongs to the AspA/AstE family. Succinylglutamate desuccinylase subfamily. The cofactor is Zn(2+).

It catalyses the reaction N-succinyl-L-glutamate + H2O = L-glutamate + succinate. The protein operates within amino-acid degradation; L-arginine degradation via AST pathway; L-glutamate and succinate from L-arginine: step 5/5. Its function is as follows. Transforms N(2)-succinylglutamate into succinate and glutamate. The chain is Succinylglutamate desuccinylase from Pseudomonas fluorescens (strain SBW25).